The primary structure comprises 693 residues: Glycine--tRNA ligase beta subunit (693 aa).

It belongs to the class-II aminoacyl-tRNA synthetase family. In terms of assembly, tetramer of two alpha and two beta subunits.

It is found in the cytoplasm. It carries out the reaction tRNA(Gly) + glycine + ATP = glycyl-tRNA(Gly) + AMP + diphosphate. In Natranaerobius thermophilus (strain ATCC BAA-1301 / DSM 18059 / JW/NM-WN-LF), this protein is Glycine--tRNA ligase beta subunit.